The following is a 449-amino-acid chain: Serine--tRNA ligase (449 aa).

255-257 contacts L-serine; the sequence is TSE. An ATP-binding site is contributed by 286–288; that stretch reads RSE. Glu309 provides a ligand contact to L-serine. Position 373–376 (373–376) interacts with ATP; that stretch reads EISS. Residue Ser409 participates in L-serine binding.

Belongs to the class-II aminoacyl-tRNA synthetase family. Type-1 seryl-tRNA synthetase subfamily. Homodimer. The tRNA molecule binds across the dimer.

Its subcellular location is the cytoplasm. The enzyme catalyses tRNA(Ser) + L-serine + ATP = L-seryl-tRNA(Ser) + AMP + diphosphate + H(+). The catalysed reaction is tRNA(Sec) + L-serine + ATP = L-seryl-tRNA(Sec) + AMP + diphosphate + H(+). Its pathway is aminoacyl-tRNA biosynthesis; selenocysteinyl-tRNA(Sec) biosynthesis; L-seryl-tRNA(Sec) from L-serine and tRNA(Sec): step 1/1. Its function is as follows. Catalyzes the attachment of serine to tRNA(Ser). Is also able to aminoacylate tRNA(Sec) with serine, to form the misacylated tRNA L-seryl-tRNA(Sec), which will be further converted into selenocysteinyl-tRNA(Sec). The polypeptide is Serine--tRNA ligase (Bordetella avium (strain 197N)).